Consider the following 829-residue polypeptide: MNSPRPTPPPFAAAAAGLPILVRASNLVTEADVTSLVWNKAPCRFCGTGCSVMVATRDGQVVATHGDIKAEVNRGINCVKGYFLSKIMYGSDRLTRPLLRMKDGKFDKQGEFQPISWEQAFDIMAEKFKAALKAKGPESVGMFGSGQWTVWEGYAANKLFKAGLRSNNIDPNARHCMASAVMGFMRSFGMDEPMGCYDDIEATDSFVLWGSNMAEMHPVLWSRVTDRRLSAPQVKVAVLSTFEHRSFELADLPMVFKPQTDLIILNYIANHIIESGAVNRDFVERHVRFAHGAEDIGYGLRPDDPLEKKAKNADKANTWSDIDFKAFAEFVKPYTLERTARESGVPAERLKALAELYADPKRKVVSFWTMGFNQHTRGVWANNLIYNIHLLTGKISEPGNSPFSLTGQPSACGTAREVGTFSHRLPADLVVTNPKHRETAEKIWKVPAGTIQEKVGFHAVQQSRMLKDGVLNVYWTQVSNNMQAGPNVMQEVLPGWRNPDNFVIVSDVYPTVSAQAADLILPSAMWVEKEGAFGNAERRTQFWHQLVKAPGEAKSDLWQLVEFSKRFTTDEVWPAELLAKAPELKGKTLYDVLFRNGQVDRFPASDLAKGYANDEVDAFGFYIQKGLFEEYAAFGRGHGHDLAPFDAYHEARGLRWPVVDGKETRWRYREGYDPYVSKGSGVQFYGYPDKKAIVFALPYEPPAEAPDQDYPFWLATGRVLEHWHTGSMTARVPELYKAVPDALVYMHPEDARQLKLRRGSEVKVVSRRGEIRARVETRGRNKPPQGLVFVPFFDANKLINKVTLDATDPISKQTDYKKCAVRIELLNLA.

A signal peptide spans 1 to 30 (MNSPRPTPPPFAAAAAGLPILVRASNLVTE). Residues 36–92 (LVWNKAPCRFCGTGCSVMVATRDGQVVATHGDIKAEVNRGINCVKGYFLSKIMYGSD) enclose the 4Fe-4S Mo/W bis-MGD-type domain. Residues Cys-43, Cys-46, Cys-50, and Cys-78 each contribute to the [4Fe-4S] cluster site. Mo-bis(molybdopterin guanine dinucleotide) contacts are provided by residues Lys-80, Gln-147, Asn-172, Cys-176, 209 to 216 (WGSNMAEM), 240 to 244 (STFEH), 259 to 261 (QTD), Met-370, Gln-374, Asn-480, 506 to 507 (SD), Lys-529, Asp-556, and 716 to 725 (TGRVLEHWHT). Phe-792 lines the substrate pocket. 2 residues coordinate Mo-bis(molybdopterin guanine dinucleotide): Asn-800 and Lys-817.

It belongs to the prokaryotic molybdopterin-containing oxidoreductase family. NasA/NapA/NarB subfamily. Component of the periplasmic nitrate reductase NapAB complex composed of NapA and NapB. [4Fe-4S] cluster serves as cofactor. It depends on Mo-bis(molybdopterin guanine dinucleotide) as a cofactor.

It is found in the periplasm. The catalysed reaction is 2 Fe(II)-[cytochrome] + nitrate + 2 H(+) = 2 Fe(III)-[cytochrome] + nitrite + H2O. Its function is as follows. Catalytic subunit of the periplasmic nitrate reductase complex NapAB. Receives electrons from NapB and catalyzes the reduction of nitrate to nitrite. The chain is Periplasmic nitrate reductase from Pseudomonas aeruginosa (strain ATCC 15692 / DSM 22644 / CIP 104116 / JCM 14847 / LMG 12228 / 1C / PRS 101 / PAO1).